The following is a 152-amino-acid chain: Large ribosomal subunit protein uL15 (152 aa).

The tract at residues 1–57 (MTSTLNTLKSNSGSRKKKLRKGRGIAAGQGASCGFGMRGQKSRSGRPTRPGFEGGQM) is disordered. Basic residues predominate over residues 14–23 (SRKKKLRKGR). The segment covering 25–37 (IAAGQGASCGFGM) has biased composition (gly residues).

This sequence belongs to the universal ribosomal protein uL15 family. Part of the 50S ribosomal subunit.

Functionally, binds to the 23S rRNA. In Prochlorococcus marinus (strain AS9601), this protein is Large ribosomal subunit protein uL15.